Reading from the N-terminus, the 269-residue chain is Shikimate dehydrogenase (NADP(+)) (269 aa).

Shikimate-binding positions include 22-24 (TLS) and Thr68. Lys72 (proton acceptor) is an active-site residue. Asn93 and Asp104 together coordinate shikimate. NADP(+) contacts are provided by residues 128–132 (GAGGA), 152–157 (NRTNLR), and Phe210. Shikimate is bound at residue Tyr212. Residue Gly233 participates in NADP(+) binding.

It belongs to the shikimate dehydrogenase family. Homodimer.

The catalysed reaction is shikimate + NADP(+) = 3-dehydroshikimate + NADPH + H(+). Its pathway is metabolic intermediate biosynthesis; chorismate biosynthesis; chorismate from D-erythrose 4-phosphate and phosphoenolpyruvate: step 4/7. Functionally, involved in the biosynthesis of the chorismate, which leads to the biosynthesis of aromatic amino acids. Catalyzes the reversible NADPH linked reduction of 3-dehydroshikimate (DHSA) to yield shikimate (SA). This chain is Shikimate dehydrogenase (NADP(+)), found in Saccharolobus islandicus (strain L.S.2.15 / Lassen #1) (Sulfolobus islandicus).